The following is a 148-amino-acid chain: Large ribosomal subunit protein uL11 (148 aa).

The disordered stretch occupies residues 89–108 (EKKKGSGAHKPGKEKVGQVT).

It belongs to the universal ribosomal protein uL11 family. Part of the ribosomal stalk of the 50S ribosomal subunit. Interacts with L10 and the large rRNA to form the base of the stalk. L10 forms an elongated spine to which L12 dimers bind in a sequential fashion forming a multimeric L10(L12)X complex. One or more lysine residues are methylated.

In terms of biological role, forms part of the ribosomal stalk which helps the ribosome interact with GTP-bound translation factors. This chain is Large ribosomal subunit protein uL11, found in Anaeromyxobacter dehalogenans (strain 2CP-1 / ATCC BAA-258).